We begin with the raw amino-acid sequence, 689 residues long: DNA ligase (689 aa).

NAD(+) contacts are provided by residues 58–62 (DQEYD), 107–108 (SL), and E138. The active-site N6-AMP-lysine intermediate is the K140. Residues R161, E198, K314, and K338 each coordinate NAD(+). C432, C435, C448, and C453 together coordinate Zn(2+). Residues 611-689 (ASSGTLSGKT…QELLEMLHGG (79 aa)) form the BRCT domain.

It belongs to the NAD-dependent DNA ligase family. LigA subfamily. Requires Mg(2+) as cofactor. Mn(2+) is required as a cofactor.

It carries out the reaction NAD(+) + (deoxyribonucleotide)n-3'-hydroxyl + 5'-phospho-(deoxyribonucleotide)m = (deoxyribonucleotide)n+m + AMP + beta-nicotinamide D-nucleotide.. DNA ligase that catalyzes the formation of phosphodiester linkages between 5'-phosphoryl and 3'-hydroxyl groups in double-stranded DNA using NAD as a coenzyme and as the energy source for the reaction. It is essential for DNA replication and repair of damaged DNA. This is DNA ligase from Methylacidiphilum infernorum (isolate V4) (Methylokorus infernorum (strain V4)).